Reading from the N-terminus, the 339-residue chain is Pleckstrin homology domain protein opy1 (339 aa).

The region spanning 25–119 (RVLKSGWLIK…WVHVLRSTTG (95 aa)) is the PH 1 domain. Residues 141-167 (ESEPNVQISDTDFDNISTEPRNQTTSP) show a composition bias toward polar residues. A disordered region spans residues 141-170 (ESEPNVQISDTDFDNISTEPRNQTTSPLDL). The region spanning 233–330 (KVLMQGTIHW…WVAALKTSID (98 aa)) is the PH 2 domain.

As to quaternary structure, interacts (via domain PH 1) with phosphatidylinositol 4-phosphate 5-kinase its3; the interaction is direct but opy1 does not appear to regulate its3 localization or function.

Its subcellular location is the cell tip. It is found in the cell membrane. Its function is as follows. Binds phosphatidylinositol 4,5-bisphosphate (PtdIns(4,5)P2/PIP2) at the cell membrane. In Schizosaccharomyces pombe (strain 972 / ATCC 24843) (Fission yeast), this protein is Pleckstrin homology domain protein opy1.